A 214-amino-acid chain; its full sequence is External core antigen (214 aa).

A signal peptide spans 1 to 19; that stretch reads MQLFHLCLIISCTCPTIQA. Residues 25–27 form an HBEAG region; the sequence is GWL. The disordered stretch occupies residues 165–214; sequence NAPILSTLPETTVVRRRDRGRSPRRRTPSPRRRRSQSPRRRRSQSRESQC. Over residues 178-207 the composition is skewed to basic residues; the sequence is VRRRDRGRSPRRRTPSPRRRRSQSPRRRRS. The stretch at 186–192 is one 1; half-length repeat; the sequence is SPRRRTP. Positions 186–208 are 3 X 8 AA repeats of S-P-R-R-R-R-S-Q; sequence SPRRRTPSPRRRRSQSPRRRRSQ. A propeptide spanning residues 186 to 214 is cleaved from the precursor; sequence SPRRRTPSPRRRRSQSPRRRRSQSRESQC. 2 consecutive repeat copies span residues 193–200 and 201–208.

Belongs to the orthohepadnavirus precore antigen family. In terms of assembly, homodimerizes. Post-translationally, phosphorylated. In terms of processing, cleaved by host furin.

It localises to the secreted. Its subcellular location is the host nucleus. May regulate immune response to the intracellular capsid in acting as a T-cell tolerogen, by having an immunoregulatory effect which prevents destruction of infected cells by cytotoxic T-cells. This immune regulation may predispose to chronicity during perinatal infections and prevent severe liver injury during adult infections. The sequence is that of External core antigen from Homo sapiens (Human).